Reading from the N-terminus, the 215-residue chain is Ependymin-1 (215 aa).

The first 20 residues, 1–20 (MHTVKLLCVVFSCLCAVAWA), serve as a signal peptide directing secretion. 2 N-linked (GlcNAc...) asparagine glycosylation sites follow: Asn71 and Asn94.

Belongs to the ependymin family. In terms of assembly, forms disulfide-linked dimers. In terms of processing, different glycosylation variants are known as EPD-beta and EPD-gamma. Binds calcium through the terminal sialic acids. As to expression, EPDs are synthesized in the meninx and secreted in the cerebrospinal fluid.

The protein resides in the secreted. In terms of biological role, may play a role in neural plasticity. May be involved during axon regeneration. The protein is Ependymin-1 (epd1) of Carassius auratus (Goldfish).